Consider the following 291-residue polypeptide: MNNDLWLPEEDFKGLPDNFLDNLVDPTNDVSVEDIETGDDEGDWDAKFQKLVPPPLDELMSLSYEFTCNGQRVQVQKHVPILKQSSSSEVFSTVDNSPPNVKVSKLLQSLSPVSVLKNTNGSGSPQNPNGDQKLAFLVKGIRSKRKRPTLLRVTFLKSFLLEMSQQFAPDESESSEISALKKRKKNKSRRLKCTHCETTTTPQWREGPNGRKTLCNACGIRFRSGRLVLEYRPAASPTFIPTVHSNLHKKIIYMRMKDNDQFDTRKIRAETSGPETRSRLRNFGRPMSYGQ.

The GATA-type zinc-finger motif lies at 187 to 241 (KSRRLKCTHCETTTTPQWREGPNGRKTLCNACGIRFRSGRLVLEYRPAASPTFIP). The disordered stretch occupies residues 271 to 291 (TSGPETRSRLRNFGRPMSYGQ).

Belongs to the type IV zinc-finger family. Class A subfamily.

The protein localises to the nucleus. Functionally, transcriptional activator that specifically binds 5'-GATA-3' or 5'-GAT-3' motifs within gene promoters. May be involved in the regulation of some light-responsive genes. This is Putative GATA transcription factor 13 (GATA13) from Arabidopsis thaliana (Mouse-ear cress).